We begin with the raw amino-acid sequence, 631 residues long: ATP-dependent zinc metalloprotease FtsH (631 aa).

The Stromal portion of the chain corresponds to 1 to 2 (MK). Residues 3-23 (ISWKNILLTLIPLGLISFLVW) form a helical membrane-spanning segment. At 24–118 (QGFNNTTNPQ…AHATNDSTPA (95 aa)) the chain is on the lumenal side. Residues 119 to 139 (WSLIGNLIFPILLIAGLAFLF) traverse the membrane as a helical segment. Residues 140–631 (RRSSNLPGGP…IDYKSQLKST (492 aa)) are Stromal-facing. ATP is bound at residue 213–220 (GPPGTGKT). His-434 contributes to the Zn(2+) binding site. The active site involves Glu-435. His-438 and Asp-512 together coordinate Zn(2+).

This sequence in the central section; belongs to the AAA ATPase family. The protein in the C-terminal section; belongs to the peptidase M41 family. As to quaternary structure, homohexamer. It depends on Zn(2+) as a cofactor.

It is found in the plastid. The protein localises to the chloroplast thylakoid membrane. Functionally, acts as a processive, ATP-dependent zinc metallopeptidase. This Guillardia theta (Cryptophyte) protein is ATP-dependent zinc metalloprotease FtsH.